Reading from the N-terminus, the 183-residue chain is Inner membrane-spanning protein YciB (183 aa).

Helical transmembrane passes span 10-30, 50-70, 72-92, 118-138, and 148-168; these read LVIF…GALI, MHLI…VFHD, AFIK…LAVS, VTWY…YVAF, and FKVF…VIYL.

Belongs to the YciB family.

It is found in the cell inner membrane. Functionally, plays a role in cell envelope biogenesis, maintenance of cell envelope integrity and membrane homeostasis. The sequence is that of Inner membrane-spanning protein YciB from Shewanella sediminis (strain HAW-EB3).